A 62-amino-acid polypeptide reads, in one-letter code: Photosystem II reaction center protein Z (62 aa).

Helical transmembrane passes span 8-28 and 41-61; these read AVFALIATSLILVIGVPVVFA and FSGTSLWIGLVFLVGILNSLI.

Belongs to the PsbZ family. PSII is composed of 1 copy each of membrane proteins PsbA, PsbB, PsbC, PsbD, PsbE, PsbF, PsbH, PsbI, PsbJ, PsbK, PsbL, PsbM, PsbT, PsbY, PsbZ, Psb30/Ycf12, at least 3 peripheral proteins of the oxygen-evolving complex and a large number of cofactors. It forms dimeric complexes.

It localises to the plastid. The protein resides in the chloroplast thylakoid membrane. Functionally, may control the interaction of photosystem II (PSII) cores with the light-harvesting antenna, regulates electron flow through the 2 photosystem reaction centers. PSII is a light-driven water plastoquinone oxidoreductase, using light energy to abstract electrons from H(2)O, generating a proton gradient subsequently used for ATP formation. In Piper cenocladum (Ant piper), this protein is Photosystem II reaction center protein Z.